Here is a 463-residue protein sequence, read N- to C-terminus: Retinoic acid receptor RXR-gamma (463 aa).

The tract at residues M1–I138 is modulating. A disordered region spans residues S18–P53. Polar residues predominate over residues H21–L33. 2 NR C4-type zinc fingers span residues C139–C159 and C175–C194. The segment at residues C139 to M204 is a DNA-binding region (nuclear receptor). The tract at residues K205–G230 is hinge. Basic and acidic residues predominate over residues E211 to S222. The interval E211 to E232 is disordered. Residues H231–P459 enclose the NR LBD domain.

The protein belongs to the nuclear hormone receptor family. NR2 subfamily. Homodimer. Heterodimer with a RAR molecule. Binds DNA preferentially as a RAR/RXR heterodimer. Interacts with RARA. Post-translationally, acetylated by EP300.

It localises to the nucleus. Its subcellular location is the cytoplasm. Receptor for retinoic acid. Retinoic acid receptors bind as heterodimers to their target response elements in response to their ligands, all-trans or 9-cis retinoic acid, and regulate gene expression in various biological processes. The RAR/RXR heterodimers bind to the retinoic acid response elements (RARE) composed of tandem 5'-AGGTCA-3' sites known as DR1-DR5. The high affinity ligand for RXRs is 9-cis retinoic acid. The protein is Retinoic acid receptor RXR-gamma (RXRG) of Pongo abelii (Sumatran orangutan).